The primary structure comprises 144 residues: Large ribosomal subunit protein uL14 (144 aa).

The interval 107-144 (NEGYTHSQHSNQREGGERIQAQPSPPHARRAVKTSFCR) is disordered.

The protein belongs to the universal ribosomal protein uL14 family. Part of the 50S ribosomal subunit. Forms a cluster with proteins L3 and L19. In the 70S ribosome, L14 and L19 interact and together make contacts with the 16S rRNA in bridges B5 and B8.

Binds to 23S rRNA. Forms part of two intersubunit bridges in the 70S ribosome. In Xanthobacter autotrophicus (strain ATCC BAA-1158 / Py2), this protein is Large ribosomal subunit protein uL14.